Consider the following 184-residue polypeptide: Probable chemoreceptor glutamine deamidase CheD (184 aa).

Belongs to the CheD family.

The catalysed reaction is L-glutaminyl-[protein] + H2O = L-glutamyl-[protein] + NH4(+). In terms of biological role, probably deamidates glutamine residues to glutamate on methyl-accepting chemotaxis receptors (MCPs), playing an important role in chemotaxis. The protein is Probable chemoreceptor glutamine deamidase CheD of Rhizobium leguminosarum bv. trifolii (strain WSM2304).